Consider the following 392-residue polypeptide: Retrovirus-related Pol polyprotein from type-1 retrotransposable element R1 4 (392 aa).

The Reverse transcriptase domain maps to 1–230; sequence PFADDLAVLV…GGVVIRRRPE (230 aa). Residues 231 to 392 are nucleic acid-binding endonuclease; it reads GLKENYNRVL…DEGLSSESEE (162 aa).

The enzyme catalyses DNA(n) + a 2'-deoxyribonucleoside 5'-triphosphate = DNA(n+1) + diphosphate. This chain is Retrovirus-related Pol polyprotein from type-1 retrotransposable element R1 4, found in Nasonia vitripennis (Parasitic wasp).